A 1616-amino-acid chain; its full sequence is Putative inactive phenolphthiocerol synthesis polyketide synthase type I Pks1 (1616 aa).

The acyltransferase stretch occupies residues T83 to V397. Catalysis depends on S174, which acts as the For acyltransferase activity. The tract at residues H445–T567 is N-terminal hotdog fold. A dehydratase region spans residues H445 to L605. Residues H445–R719 enclose the PKS/mFAS DH domain. H477 serves as the catalytic Proton acceptor; for dehydratase activity. The tract at residues A579–R719 is C-terminal hotdog fold. D640 serves as the catalytic Proton donor; for dehydratase activity. The enoylreductase stretch occupies residues G910–L1215. NADP(+) contacts are provided by residues V1040–A1057 and T1229–A1244. Positions G1228–P1409 are beta-ketoacyl reductase. The Carrier domain maps to E1514–M1589. Residue S1549 is modified to O-(pantetheine 4'-phosphoryl)serine. The segment covering Q1588 to V1604 has biased composition (polar residues). A disordered region spans residues Q1588 to A1616.

Pantetheine 4'-phosphate serves as cofactor.

Its pathway is lipid metabolism; fatty acid biosynthesis. Functionally, may play a role in phthiocerol biosynthesis. This is Putative inactive phenolphthiocerol synthesis polyketide synthase type I Pks1 (pks1) from Mycobacterium tuberculosis (strain ATCC 25618 / H37Rv).